We begin with the raw amino-acid sequence, 327 residues long: Phage tubulin-like protein (327 aa).

Residues 14–15 (GA) and 107–109 (ASG) contribute to the GTP site. The tract at residues 303–327 (KANMRKRQSTLDVDDQATSSGLVFD) is disordered. The segment covering 318-327 (QATSSGLVFD) has biased composition (polar residues).

This sequence belongs to the FtsZ family. PhuZ subfamily. In terms of assembly, homomultimer. Polymerizes in a strictly GTP-dependent manner.

It is found in the host cytoplasm. It catalyses the reaction GTP + H2O = GDP + phosphate + H(+). The non-hydrolyzable GTP analog GMPCPP stabilizes filaments, which never disassemble. Functionally, a tubulin-like GTPase that forms filaments, which are required for positioning viral DNA and capsids in the middle of the host cell for optimal replication. The motor component of a partition system which pushes phage DNA (encased by protein gp105) to the center of the bacterial host cell. Also required for movement of phage capsids to the vicinity of the viral DNA and rotation of the encased viral DNA at midcell. Forms filaments during the lytic phase, which position phage DNA at the center of the bacterial host cell. Filaments have a three-stranded intertwined architecture and form a spindle-like cytoskeleton within the infected cell. Has GTPase activity. Filaments grow at the plus end and depolymerize at the minus end, a process called treadmilling, and switch from growing in a polar manner to catastrophic depolymerization, i.e. they display dynamic instability, like tubulin. In infected host cells the filament ends close to the cell pole are relatively stable, while the other end near the phage DNA is highly dynamic. Both capsid movement and DNA rotation probably require treadmilling. The sequence is that of Phage tubulin-like protein from Pseudomonas phage phiKZ.